Consider the following 424-residue polypeptide: MELSYRLFICLLLWGSTELCYPQPLRLLQGGTSHPETALQPVVVECQEATLVVTVSKDLFGTRKLIRAVDLTLGPEGCEPLVSTDTEDVVRFEVGLHECGNSMQVTDDALVYSTFLLHDPRPVGNLSIVRTNRAEIPIECRYPRRGNVSSQAILPTWLPFRTTVFSEEKLTFSLRLMEENWSTEKRTPTFHLGDVAHLQAEIHTGSHVPLRLFVDHCVATPTPDQNASPYHTIVDFHGCLVDGLTDASSAFQAPRPRPDTLQFTVDVFHFANDSRNMIYITCHLKVTLAEQDPDELNKACSFSKASNSWFPVEGPADICQCCSKGDCGTPSHARRQPHVVSLGSGSPARDRRHVTEEADVTVGPLIFLDRTGDHEMEQWALPADTSLLLLGTGLAVVALLTLTAVILVLTRRCRTASLPVSASE.

A signal peptide spans 1–22 (MELSYRLFICLLLWGSTELCYP). Residue Q23 is modified to Pyrrolidone carboxylic acid. The Extracellular segment spans residues 23-387 (QPLRLLQGGT…QWALPADTSL (365 aa)). T32 carries an O-linked (GalNAc...) threonine glycan. Residues 45-307 (ECQEATLVVT…KACSFSKASN (263 aa)) enclose the ZP domain. 2 disulfide bridges follow: C46/C140 and C78/C99. Residues N125 and N147 are each glycosylated (N-linked (GlcNAc...) asparagine). T156, T162, and T163 each carry an O-linked (GalNAc...) threonine glycan. N-linked (GlcNAc...) asparagine glycans are attached at residues N180 and N272. Intrachain disulfides connect C217-C282 and C239-C300. Residues 351 to 424 (RRHVTEEADV…TASLPVSASE (74 aa)) constitute a propeptide, removed in mature form. The chain crosses the membrane as a helical span at residues 388–408 (LLLGTGLAVVALLTLTAVILV). At 409–424 (LTRRCRTASLPVSASE) the chain is on the cytoplasmic side.

This sequence belongs to the ZP domain family. ZPC subfamily. As to quaternary structure, polymers of ZP2 and ZP3 organized into long filaments cross-linked by ZP1 homodimers. Interacts with ZP1 and ZP2. In terms of processing, proteolytically cleaved before the transmembrane segment to yield the secreted ectodomain incorporated in the zona pellucida. N-glycosylated. Post-translationally, O-glycosylated; removal of O-linked glycans may play an important role in the post-fertilization block to polyspermy. In terms of tissue distribution, expressed in oocytes.

It localises to the zona pellucida. Its subcellular location is the cell membrane. Component of the zona pellucida, an extracellular matrix surrounding oocytes which mediates sperm binding, induction of the acrosome reaction and prevents post-fertilization polyspermy. The zona pellucida is composed of 3 to 4 glycoproteins, ZP1, ZP2, ZP3, and ZP4. ZP3 is essential for sperm binding and zona matrix formation. The sequence is that of Zona pellucida sperm-binding protein 3 (ZP3) from Callithrix sp. (Marmoset).